Reading from the N-terminus, the 88-residue chain is Large ribosomal subunit protein bL27 (88 aa).

The segment at 1-24 (MATKKSGGSSGNGRDSRGRRLGVK) is disordered.

This sequence belongs to the bacterial ribosomal protein bL27 family.

The sequence is that of Large ribosomal subunit protein bL27 from Ehrlichia canis (strain Jake).